The following is a 302-amino-acid chain: Recombination-associated protein RdgC (302 aa).

Belongs to the RdgC family.

It is found in the cytoplasm. The protein localises to the nucleoid. In terms of biological role, may be involved in recombination. This is Recombination-associated protein RdgC from Actinobacillus pleuropneumoniae serotype 7 (strain AP76).